Consider the following 106-residue polypeptide: NADH dehydrogenase [ubiquinone] iron-sulfur protein 5 (106 aa).

Positions 30–74 constitute a CHCH domain; the sequence is AGRCHAFEKEWIECAHGIGYTRAEKECKIEYDDFVECLLRQKTMR. 2 consecutive short sequence motifs (cx9C motif) follow at residues 33–43 and 56–66; these read CHAFEKEWIEC and CKIEYDDFVEC. 2 disulfide bridges follow: cysteine 33–cysteine 66 and cysteine 43–cysteine 56. Residues 84–106 form a disordered region; sequence DKLIKEGKYTPPPHHIGKGEPRP.

This sequence belongs to the complex I NDUFS5 subunit family. In terms of assembly, mammalian complex I is composed of 45 different subunits. This is a component of the iron-sulfur (IP) fragment of the enzyme.

Its subcellular location is the mitochondrion inner membrane. It is found in the mitochondrion intermembrane space. Its function is as follows. Accessory subunit of the mitochondrial membrane respiratory chain NADH dehydrogenase (Complex I), that is believed not to be involved in catalysis. Complex I functions in the transfer of electrons from NADH to the respiratory chain. The immediate electron acceptor for the enzyme is believed to be ubiquinone. In Homo sapiens (Human), this protein is NADH dehydrogenase [ubiquinone] iron-sulfur protein 5 (NDUFS5).